Consider the following 273-residue polypeptide: 4-hydroxy-tetrahydrodipicolinate reductase (273 aa).

Residues 11-16 and 106-108 contribute to the NAD(+) site; these read GALGRM and GTT. His-162 (proton donor/acceptor) is an active-site residue. His-163 serves as a coordination point for (S)-2,3,4,5-tetrahydrodipicolinate. The active-site Proton donor is the Lys-166. (S)-2,3,4,5-tetrahydrodipicolinate is bound at residue 172 to 173; it reads GT.

Belongs to the DapB family.

It is found in the cytoplasm. The enzyme catalyses (S)-2,3,4,5-tetrahydrodipicolinate + NAD(+) + H2O = (2S,4S)-4-hydroxy-2,3,4,5-tetrahydrodipicolinate + NADH + H(+). It carries out the reaction (S)-2,3,4,5-tetrahydrodipicolinate + NADP(+) + H2O = (2S,4S)-4-hydroxy-2,3,4,5-tetrahydrodipicolinate + NADPH + H(+). It participates in amino-acid biosynthesis; L-lysine biosynthesis via DAP pathway; (S)-tetrahydrodipicolinate from L-aspartate: step 4/4. In terms of biological role, catalyzes the conversion of 4-hydroxy-tetrahydrodipicolinate (HTPA) to tetrahydrodipicolinate. The sequence is that of 4-hydroxy-tetrahydrodipicolinate reductase from Synechococcus sp. (strain RCC307).